Consider the following 225-residue polypeptide: NAD(P)H-quinone oxidoreductase subunit K, chloroplastic (225 aa).

The [4Fe-4S] cluster site is built by Cys-43, Cys-44, Cys-108, and Cys-139.

Belongs to the complex I 20 kDa subunit family. In terms of assembly, NDH is composed of at least 16 different subunits, 5 of which are encoded in the nucleus. [4Fe-4S] cluster serves as cofactor.

Its subcellular location is the plastid. It is found in the chloroplast thylakoid membrane. The enzyme catalyses a plastoquinone + NADH + (n+1) H(+)(in) = a plastoquinol + NAD(+) + n H(+)(out). It catalyses the reaction a plastoquinone + NADPH + (n+1) H(+)(in) = a plastoquinol + NADP(+) + n H(+)(out). NDH shuttles electrons from NAD(P)H:plastoquinone, via FMN and iron-sulfur (Fe-S) centers, to quinones in the photosynthetic chain and possibly in a chloroplast respiratory chain. The immediate electron acceptor for the enzyme in this species is believed to be plastoquinone. Couples the redox reaction to proton translocation, and thus conserves the redox energy in a proton gradient. The protein is NAD(P)H-quinone oxidoreductase subunit K, chloroplastic of Lactuca sativa (Garden lettuce).